The sequence spans 177 residues: Large ribosomal subunit protein uL6 (177 aa).

Belongs to the universal ribosomal protein uL6 family. Part of the 50S ribosomal subunit.

Its function is as follows. This protein binds to the 23S rRNA, and is important in its secondary structure. It is located near the subunit interface in the base of the L7/L12 stalk, and near the tRNA binding site of the peptidyltransferase center. This is Large ribosomal subunit protein uL6 from Mannheimia succiniciproducens (strain KCTC 0769BP / MBEL55E).